A 366-amino-acid polypeptide reads, in one-letter code: tRNA/tmRNA (uracil-C(5))-methyltransferase (366 aa).

S-adenosyl-L-methionine-binding residues include Q189, Y217, N222, E238, and D298. The active-site Nucleophile is the C323. E357 functions as the Proton acceptor in the catalytic mechanism.

This sequence belongs to the class I-like SAM-binding methyltransferase superfamily. RNA M5U methyltransferase family. TrmA subfamily.

The enzyme catalyses uridine(54) in tRNA + S-adenosyl-L-methionine = 5-methyluridine(54) in tRNA + S-adenosyl-L-homocysteine + H(+). The catalysed reaction is uridine(341) in tmRNA + S-adenosyl-L-methionine = 5-methyluridine(341) in tmRNA + S-adenosyl-L-homocysteine + H(+). Its function is as follows. Dual-specificity methyltransferase that catalyzes the formation of 5-methyluridine at position 54 (m5U54) in all tRNAs, and that of position 341 (m5U341) in tmRNA (transfer-mRNA). In Photorhabdus laumondii subsp. laumondii (strain DSM 15139 / CIP 105565 / TT01) (Photorhabdus luminescens subsp. laumondii), this protein is tRNA/tmRNA (uracil-C(5))-methyltransferase.